Here is a 72-residue protein sequence, read N- to C-terminus: Large ribosomal subunit protein uL29 (72 aa).

It belongs to the universal ribosomal protein uL29 family.

This is Large ribosomal subunit protein uL29 from Microcystis aeruginosa (strain NIES-843 / IAM M-2473).